The primary structure comprises 272 residues: NADH-dependent L-xylulose reductase (272 aa).

2 residues coordinate NADP(+): leucine 24 and aspartate 78. Serine 160 functions as the Proton donor in the catalytic mechanism. Residues tyrosine 175, lysine 179, and isoleucine 208 each coordinate NADP(+). Tyrosine 175 functions as the Proton acceptor in the catalytic mechanism. The active-site Lowers pKa of active site Tyr is lysine 179.

It belongs to the short-chain dehydrogenases/reductases (SDR) family.

It catalyses the reaction xylitol + NAD(+) = L-xylulose + NADH + H(+). The catalysed reaction is D-arabinitol + NAD(+) = D-ribulose + NADH + H(+). NADH-dependent L-xylulose reductase; part of the yeast pathway for L-arabinose catabolism. Reversibly converts L-xylulose to xylitol and D-ribulose to D-arabinitol. It has a much lower activity with D-xylulose. Sugar alcohols can serve as a substrate when the hydroxyl group of C-2 is in the L- and the hydroxyl group of the C-3 is in the D-configuration. Also seems to be specific for sugar alcohols that have not more than 5 carbons since no activity is observed with dulcitol (galactitol), which has the hydroxyl group of C-2 in L- and of C-3 in D-configuration, but is a six-carbon sugar alcohol. This Ambrosiozyma monospora (Yeast) protein is NADH-dependent L-xylulose reductase.